The primary structure comprises 261 residues: Carnitinyl-CoA dehydratase (261 aa).

Residue Glu111 is the Nucleophile of the active site. Catalysis depends on Glu131, which acts as the Proton acceptor.

This sequence belongs to the enoyl-CoA hydratase/isomerase family.

The enzyme catalyses (R)-carnitinyl-CoA = crotonobetainyl-CoA + H2O. It participates in amine and polyamine metabolism; carnitine metabolism. Catalyzes the reversible dehydration of L-carnitinyl-CoA to crotonobetainyl-CoA. In Escherichia coli O6:K15:H31 (strain 536 / UPEC), this protein is Carnitinyl-CoA dehydratase.